The sequence spans 178 residues: uncharacterized protein (178 aa).

Over residues M1 to D13 the composition is skewed to polar residues. Disordered regions lie at residues M1–P24 and W47–K114.

This is an uncharacterized protein from Caenorhabditis elegans.